The sequence spans 248 residues: tRNA uridine(34) hydroxylase (248 aa).

A Rhodanese domain is found at arginine 127–tyrosine 221. Cysteine 181 acts as the Cysteine persulfide intermediate in catalysis.

This sequence belongs to the TrhO family.

The enzyme catalyses uridine(34) in tRNA + AH2 + O2 = 5-hydroxyuridine(34) in tRNA + A + H2O. In terms of biological role, catalyzes oxygen-dependent 5-hydroxyuridine (ho5U) modification at position 34 in tRNAs. The protein is tRNA uridine(34) hydroxylase of Xanthomonas euvesicatoria pv. vesicatoria (strain 85-10) (Xanthomonas campestris pv. vesicatoria).